The primary structure comprises 476 residues: Protein transport protein Sec61 subunit alpha (476 aa).

At Gly-2–Leu-33 the chain is on the cytoplasmic side. The helical transmembrane segment at Trp-34–Ile-53 threads the bilayer. The Lumenal segment spans residues Met-54–Leu-76. A helical transmembrane segment spans residues Met-77–Gly-96. The Cytoplasmic portion of the chain corresponds to Ala-97–Lys-117. The chain crosses the membrane as a helical span at residues Leu-118 to Gly-138. At Asp-139 to Gly-144 the chain is on the lumenal side. Residues Ala-145–Leu-165 form a helical membrane-spanning segment. Residues Asp-166 to Gly-172 lie on the Cytoplasmic side of the membrane. The chain crosses the membrane as a helical span at residues Tyr-173 to Trp-193. Residues Lys-194–Pro-240 lie on the Lumenal side of the membrane. The chain crosses the membrane as a helical span at residues Asn-241–Phe-261. At Arg-262–Asn-288 the chain is on the cytoplasmic side. A helical transmembrane segment spans residues Ile-289–Ser-309. Residues Thr-310–Val-354 are Lumenal-facing. A helical membrane pass occupies residues Leu-355–Phe-375. Residues Ser-376–Ala-420 are Cytoplasmic-facing. The helical transmembrane segment at Ala-421–Ile-441 threads the bilayer. Residues Gly-442–Thr-445 lie on the Lumenal side of the membrane. Residues Gly-446 to Val-462 traverse the membrane as a helical segment. Residues Lys-463–Phe-476 are Cytoplasmic-facing.

This sequence belongs to the SecY/SEC61-alpha family. The SEC61 channel-forming translocon complex consists of channel-forming core components SEC61A1, SEC61B and SEC61G and different auxiliary components such as SEC62 and SEC63. The SEC61 channel associates with the multi-pass translocon (MPT) complex.

It is found in the endoplasmic reticulum membrane. Component of SEC61 channel-forming translocon complex that mediates transport of signal peptide-containing precursor polypeptides across the endoplasmic reticulum (ER). Forms a ribosome receptor and a gated pore in the ER membrane, both functions required for cotranslational translocation of nascent polypeptides. May cooperate with auxiliary protein SEC62, SEC63 and HSPA5/BiP to enable post-translational transport of small presecretory proteins. The SEC61 channel is also involved in ER membrane insertion of transmembrane proteins: it mediates membrane insertion of the first few transmembrane segments of proteins, while insertion of subsequent transmembrane regions of multi-pass membrane proteins is mediated by the multi-pass translocon (MPT) complex. In Boreogadus saida (Polar cod), this protein is Protein transport protein Sec61 subunit alpha (sec61a).